Here is a 226-residue protein sequence, read N- to C-terminus: Uridylate kinase (226 aa).

ATP is bound at residue 6–10 (KISGK). Glycine 43 contacts UMP. Positions 44 and 48 each coordinate ATP. Residues aspartate 65 and 113 to 119 (FQPGQST) contribute to the UMP site. Residues threonine 139, asparagine 140, tyrosine 145, and aspartate 148 each coordinate ATP.

This sequence belongs to the UMP kinase family. In terms of assembly, homohexamer.

The protein localises to the cytoplasm. It catalyses the reaction UMP + ATP = UDP + ADP. Its pathway is pyrimidine metabolism; CTP biosynthesis via de novo pathway; UDP from UMP (UMPK route): step 1/1. With respect to regulation, inhibited by UTP. Functionally, catalyzes the reversible phosphorylation of UMP to UDP. The polypeptide is Uridylate kinase (Saccharolobus islandicus (strain Y.N.15.51 / Yellowstone #2) (Sulfolobus islandicus)).